The primary structure comprises 272 residues: uncharacterized protein (272 aa).

Positions 1-27 constitute an HTH merR-type domain; sequence MDTLAFINRALVEEGYSLKDIKLVLIT.

This is an uncharacterized protein from Aquifex aeolicus (strain VF5).